The chain runs to 130 residues: Snaclec B8 (130 aa).

3 disulfides stabilise this stretch: Cys2-Cys13, Cys30-Cys124, and Cys99-Cys116. In terms of domain architecture, C-type lectin spans 9–125 (HEGHCYKVFK…CELAYHFICM (117 aa)).

This sequence belongs to the snaclec family. In terms of assembly, heterodimer; disulfide-linked. As to expression, expressed by the venom gland.

It is found in the secreted. Interferes with one step of hemostasis (modulation of platelet aggregation, or coagulation cascade, for example). This Macrovipera lebetinus (Levantine viper) protein is Snaclec B8.